We begin with the raw amino-acid sequence, 100 residues long: Small ribosomal subunit protein uS14c (100 aa).

The protein belongs to the universal ribosomal protein uS14 family. As to quaternary structure, part of the 30S ribosomal subunit.

It localises to the plastid. The protein resides in the chloroplast. Functionally, binds 16S rRNA, required for the assembly of 30S particles. This Chloranthus spicatus (Chulantree) protein is Small ribosomal subunit protein uS14c.